The sequence spans 333 residues: Terminal uridylyltransferase 4 (333 aa).

UTP is bound by residues Ser-54 and 65–68 (SDVD). Asp-66 and Asp-68 together coordinate Mg(2+). Arg-121 provides a ligand contact to RNA. UTP contacts are provided by residues 144-148 (GVRNS), Lys-169, Lys-173, and 188-189 (SY). In terms of domain architecture, PAP-associated spans 237–302 (LGTQVLDFLH…WCIEDPYELN (66 aa)).

This sequence belongs to the DNA polymerase type-B-like family. In terms of assembly, monomer. Requires Mg(2+) as cofactor. It depends on Mn(2+) as a cofactor.

It carries out the reaction RNA(n) + UTP = RNA(n)-3'-uridine ribonucleotide + diphosphate. The 3' uridylated RNA substrate is involved in the selective incorporation of UTP; UTP binding is favored due to the constraint posed on the positioning of the NTP base by the continuous stacking interactions between Tyr-189 side chain, the bound NTP, and the terminal nucleoside base of the RNA substrate. Functionally, terminal uridylyltransferase which, specifically, catalyzes the addition of Us to the 3'-hydroxyl group of single-stranded RNAs with a 3'-terminal U. The polypeptide is Terminal uridylyltransferase 4 (Trypanosoma brucei brucei (strain 927/4 GUTat10.1)).